The following is a 420-amino-acid chain: CinA-like protein (420 aa).

It belongs to the CinA family.

The polypeptide is CinA-like protein (Syntrophus aciditrophicus (strain SB)).